The chain runs to 557 residues: Dihydroxy-acid dehydratase (557 aa).

Residue Asp-78 participates in Mg(2+) binding. Position 119 (Cys-119) interacts with [2Fe-2S] cluster. Residues Asp-120 and Lys-121 each contribute to the Mg(2+) site. An N6-carboxylysine modification is found at Lys-121. Cys-192 provides a ligand contact to [2Fe-2S] cluster. Glu-442 lines the Mg(2+) pocket. Ser-468 serves as the catalytic Proton acceptor.

It belongs to the IlvD/Edd family. As to quaternary structure, homodimer. [2Fe-2S] cluster serves as cofactor. The cofactor is Mg(2+).

It catalyses the reaction (2R)-2,3-dihydroxy-3-methylbutanoate = 3-methyl-2-oxobutanoate + H2O. The catalysed reaction is (2R,3R)-2,3-dihydroxy-3-methylpentanoate = (S)-3-methyl-2-oxopentanoate + H2O. The protein operates within amino-acid biosynthesis; L-isoleucine biosynthesis; L-isoleucine from 2-oxobutanoate: step 3/4. It participates in amino-acid biosynthesis; L-valine biosynthesis; L-valine from pyruvate: step 3/4. Its function is as follows. Functions in the biosynthesis of branched-chain amino acids. Catalyzes the dehydration of (2R,3R)-2,3-dihydroxy-3-methylpentanoate (2,3-dihydroxy-3-methylvalerate) into 2-oxo-3-methylpentanoate (2-oxo-3-methylvalerate) and of (2R)-2,3-dihydroxy-3-methylbutanoate (2,3-dihydroxyisovalerate) into 2-oxo-3-methylbutanoate (2-oxoisovalerate), the penultimate precursor to L-isoleucine and L-valine, respectively. This Bacillus cereus (strain AH187) protein is Dihydroxy-acid dehydratase.